The following is a 1390-amino-acid chain: DNA-directed RNA polymerase subunit beta' (1390 aa).

Residues Cys-73, Cys-75, Cys-88, and Cys-91 each coordinate Zn(2+). Mg(2+)-binding residues include Asp-464, Asp-466, and Asp-468. The Zn(2+) site is built by Cys-810, Cys-884, Cys-891, and Cys-894. A disordered region spans residues 1365–1390; sequence EKKEQKIYGNGEEPAKEQKWIPQAGT.

This sequence belongs to the RNA polymerase beta' chain family. In terms of assembly, the RNAP catalytic core consists of 2 alpha, 1 beta, 1 beta' and 1 omega subunit. When a sigma factor is associated with the core the holoenzyme is formed, which can initiate transcription. It depends on Mg(2+) as a cofactor. Zn(2+) serves as cofactor.

The enzyme catalyses RNA(n) + a ribonucleoside 5'-triphosphate = RNA(n+1) + diphosphate. Functionally, DNA-dependent RNA polymerase catalyzes the transcription of DNA into RNA using the four ribonucleoside triphosphates as substrates. The sequence is that of DNA-directed RNA polymerase subunit beta' from Methylacidiphilum infernorum (isolate V4) (Methylokorus infernorum (strain V4)).